A 969-amino-acid chain; its full sequence is Chromosome transmission fidelity protein 18 homolog (969 aa).

The disordered stretch occupies residues 30 to 97 (EGTRDQAPPG…APSSPMVKRP (68 aa)). Thr-51 is subject to Phosphothreonine. The residue at position 221 (Ser-221) is a Phosphoserine. Disordered stretches follow at residues 250–269 (SEGEEAVLEGPPAEEPAPGQ) and 318–340 (RKPRPGVETTRVGKEATAPGKWK). Over residues 257–268 (LEGPPAEEPAPG) the composition is skewed to low complexity. 369 to 376 (GPPGLGKT) serves as a coordination point for ATP. The segment at 856-889 (ARSGPQVDQGSSGPASLWTDSGEKGTRQPAPRNH) is disordered. The segment covering 876–889 (SGEKGTRQPAPRNH) has biased composition (basic and acidic residues).

This sequence belongs to the activator 1 small subunits family. CTF18 subfamily. As to quaternary structure, component of the CTF18-RFC complex, which consists of CTF18, CTF8, DCC1, RFC2, RFC3, RFC4 and RFC5. During assembly of the CTF18-RFC complex, CTF18 may first assemble into a subcomplex with RFC2, RFC3, RFC4 and RFC5. CTF18 then interacts directly with CTF8, which in turn interacts with DCC1. The CTF18-RFC complex associates with PCNA and with DNA polymerase POLH. The CTF18-RFC complex does not interact with the Rad9/Rad1/Hus1 complex. CTF18 interacts with SMC1A and RAD21. Interacts with DDX11.

The protein resides in the nucleus. In terms of biological role, chromosome cohesion factor involved in sister chromatid cohesion and fidelity of chromosome transmission. Component of one of the cell nuclear antigen loader complexes, CTF18-replication factor C (CTF18-RFC), which consists of CTF18, CTF8, DCC1, RFC2, RFC3, RFC4 and RFC5. The CTF18-RFC complex binds to single-stranded and primed DNAs and has weak ATPase activity that is stimulated by the presence of primed DNA, replication protein A (RPA) and by proliferating cell nuclear antigen (PCNA). The CTF18-RFC complex catalyzes the ATP-dependent loading of PCNA onto primed and gapped DNA. Interacts with and stimulates DNA polymerase POLH. During DNA repair synthesis, involved in loading DNA polymerase POLE at the sites of local damage. The protein is Chromosome transmission fidelity protein 18 homolog (Chtf18) of Mus musculus (Mouse).